The sequence spans 503 residues: ATP synthase subunit alpha, chloroplastic (503 aa).

170–177 (GDRQTGKT) is a binding site for ATP.

This sequence belongs to the ATPase alpha/beta chains family. As to quaternary structure, F-type ATPases have 2 components, CF(1) - the catalytic core - and CF(0) - the membrane proton channel. CF(1) has five subunits: alpha(3), beta(3), gamma(1), delta(1), epsilon(1). CF(0) has four main subunits: a, b, b' and c.

It is found in the plastid. The protein localises to the chloroplast thylakoid membrane. It carries out the reaction ATP + H2O + 4 H(+)(in) = ADP + phosphate + 5 H(+)(out). Functionally, produces ATP from ADP in the presence of a proton gradient across the membrane. The alpha chain is a regulatory subunit. The protein is ATP synthase subunit alpha, chloroplastic of Gracilaria tenuistipitata var. liui (Red alga).